A 766-amino-acid chain; its full sequence is Ribonuclease Z, mitochondrial (766 aa).

The N-terminal 25 residues, 1–25 (MYLVKSAGSPIYRTLRTLTTSNLMA), are a transit peptide targeting the mitochondrion.

Belongs to the RNase Z family. Homodimer. Zn(2+) serves as cofactor.

It localises to the nucleus. The protein localises to the mitochondrion. It catalyses the reaction Endonucleolytic cleavage of RNA, removing extra 3' nucleotides from tRNA precursor, generating 3' termini of tRNAs. A 3'-hydroxy group is left at the tRNA terminus and a 5'-phosphoryl group is left at the trailer molecule.. Functionally, zinc phosphodiesterase, which displays some tRNA 3'-processing endonuclease activity of nuclear and mitochondrial pre-tRNA. Probably involved in tRNA maturation, by removing a 3'-trailer from precursor tRNA. May participate in tRNA processing in the developing embryo. The protein is Ribonuclease Z, mitochondrial of Drosophila melanogaster (Fruit fly).